Reading from the N-terminus, the 331-residue chain is Ferrochelatase (331 aa).

Residues histidine 187 and glutamate 286 each contribute to the Fe cation site.

It belongs to the ferrochelatase family.

The protein resides in the cytoplasm. It carries out the reaction heme b + 2 H(+) = protoporphyrin IX + Fe(2+). The protein operates within porphyrin-containing compound metabolism; protoheme biosynthesis; protoheme from protoporphyrin-IX: step 1/1. Catalyzes the ferrous insertion into protoporphyrin IX. This is Ferrochelatase from Legionella pneumophila (strain Corby).